The following is a 169-amino-acid chain: Myosin regulatory light chain 2, skeletal muscle isoform A (169 aa).

Residue Ser-21 is modified to Phosphoserine. 3 EF-hand domains span residues Ser-26 to Leu-61, Asp-96 to Arg-131, and Phe-132 to Lys-167. Ca(2+) is bound by residues Asp-39, Asn-41, Asp-43, and Asp-50.

As to quaternary structure, myosin is a hexamer of 2 heavy chains and 4 light chains. Interacts with nanos3; the interaction negatively regulates mylpfa phosphorylation.

Myosin regulatory subunit that plays a role to maintain muscle integrity during early development. Plays a role in muscle contraction. The protein is Myosin regulatory light chain 2, skeletal muscle isoform A (mylpfa) of Danio rerio (Zebrafish).